The primary structure comprises 957 residues: Glycine dehydrogenase (decarboxylating) (957 aa).

Lys708 carries the N6-(pyridoxal phosphate)lysine modification.

The protein belongs to the GcvP family. In terms of assembly, the glycine cleavage system is composed of four proteins: P, T, L and H. It depends on pyridoxal 5'-phosphate as a cofactor.

It catalyses the reaction N(6)-[(R)-lipoyl]-L-lysyl-[glycine-cleavage complex H protein] + glycine + H(+) = N(6)-[(R)-S(8)-aminomethyldihydrolipoyl]-L-lysyl-[glycine-cleavage complex H protein] + CO2. Functionally, the glycine cleavage system catalyzes the degradation of glycine. The P protein binds the alpha-amino group of glycine through its pyridoxal phosphate cofactor; CO(2) is released and the remaining methylamine moiety is then transferred to the lipoamide cofactor of the H protein. The protein is Glycine dehydrogenase (decarboxylating) of Escherichia coli (strain ATCC 8739 / DSM 1576 / NBRC 3972 / NCIMB 8545 / WDCM 00012 / Crooks).